The chain runs to 199 residues: Dephospho-CoA kinase (199 aa).

Positions 3 to 199 constitute a DPCK domain; the sequence is VLGLTGSIGM…AAARMPRRRP (197 aa). Position 11-16 (11-16) interacts with ATP; that stretch reads GMGKST.

The protein belongs to the CoaE family.

Its subcellular location is the cytoplasm. The catalysed reaction is 3'-dephospho-CoA + ATP = ADP + CoA + H(+). Its pathway is cofactor biosynthesis; coenzyme A biosynthesis; CoA from (R)-pantothenate: step 5/5. Its function is as follows. Catalyzes the phosphorylation of the 3'-hydroxyl group of dephosphocoenzyme A to form coenzyme A. The sequence is that of Dephospho-CoA kinase from Rhodopseudomonas palustris (strain HaA2).